Consider the following 333-residue polypeptide: Anthranilate phosphoribosyltransferase (333 aa).

Residues Gly80, 83 to 84 (GD), Ser88, 90 to 93 (NIST), 108 to 116 (KHGNRSVSS), and Ser120 contribute to the 5-phospho-alpha-D-ribose 1-diphosphate site. Gly80 lines the anthranilate pocket. Ser92 is a Mg(2+) binding site. Asn111 contacts anthranilate. Residue Arg166 participates in anthranilate binding. Residues Asp224 and Glu225 each contribute to the Mg(2+) site.

Belongs to the anthranilate phosphoribosyltransferase family. As to quaternary structure, homodimer. Mg(2+) serves as cofactor.

The catalysed reaction is N-(5-phospho-beta-D-ribosyl)anthranilate + diphosphate = 5-phospho-alpha-D-ribose 1-diphosphate + anthranilate. It functions in the pathway amino-acid biosynthesis; L-tryptophan biosynthesis; L-tryptophan from chorismate: step 2/5. Functionally, catalyzes the transfer of the phosphoribosyl group of 5-phosphorylribose-1-pyrophosphate (PRPP) to anthranilate to yield N-(5'-phosphoribosyl)-anthranilate (PRA). The sequence is that of Anthranilate phosphoribosyltransferase from Yersinia pseudotuberculosis serotype O:1b (strain IP 31758).